A 241-amino-acid chain; its full sequence is Small ribosomal subunit protein uS2 (241 aa).

Belongs to the universal ribosomal protein uS2 family.

This chain is Small ribosomal subunit protein uS2, found in Pectobacterium carotovorum subsp. carotovorum (strain PC1).